A 351-amino-acid chain; its full sequence is UDP-N-acetylenolpyruvoylglucosamine reductase (351 aa).

The region spanning 11 to 213 is the FAD-binding PCMH-type domain; the sequence is GVGGSIACFI…KQVRDQVLRI (203 aa). The active site involves R158. The active-site Proton donor is the S239. The active site involves E343.

This sequence belongs to the MurB family. It depends on FAD as a cofactor.

Its subcellular location is the cytoplasm. The enzyme catalyses UDP-N-acetyl-alpha-D-muramate + NADP(+) = UDP-N-acetyl-3-O-(1-carboxyvinyl)-alpha-D-glucosamine + NADPH + H(+). It participates in cell wall biogenesis; peptidoglycan biosynthesis. In terms of biological role, cell wall formation. The sequence is that of UDP-N-acetylenolpyruvoylglucosamine reductase from Tropheryma whipplei (strain Twist) (Whipple's bacillus).